Consider the following 458-residue polypeptide: MQAEPKKSQAEQRAVAEPVSEPVSLVGEEYEVEVGPVAHGGHCIARTSEGQVLFVRHTLPGERVVARVTEGEEGARFLRADAVEILDPSKDRIEAPCPFAGPGRCGGCDWQHAKPGAQRRLKGEVVAEQLQRLAGLTPEEAGWDGTVMPAEGDKLPAGQVPSWRTRVQFAVDADGRAGLRRHRSHEIEPIDHCMIAAEGVSELGIERRDWPGMATVEAIAATGSQDRQVILTPRPGARLPIVELDRPVSVMRVGEKDGGVHRVHGRPFVRERADDRTYRVGSGGFWQVHPKAADTLVTAVMQGLLPRKGDMALDLYCGVGLFAGALADRVGDQGAVLGIESGKRAVEDARHNLAAFDRVRIEQGKVESVLPRTGIDEVDLIVLDPPRAGAGRKTVQHLSTLGARRIAYVACDPAALARDLGYFQDGGYRVRTLRVFDLFPMTAHVECVAILEPAAKGL.

Over residues 1-10 the composition is skewed to basic and acidic residues; that stretch reads MQAEPKKSQA. The segment at 1 to 20 is disordered; sequence MQAEPKKSQAEQRAVAEPVS. In terms of domain architecture, TRAM spans 23-84; the sequence is VSLVGEEYEV…ARFLRADAVE (62 aa). [4Fe-4S] cluster contacts are provided by Cys97, Cys105, Cys108, and Cys193. S-adenosyl-L-methionine-binding residues include Gln287, Tyr316, Glu340, and Asp384. The active-site Nucleophile is Cys411.

The protein belongs to the class I-like SAM-binding methyltransferase superfamily. RNA M5U methyltransferase family.

This is an uncharacterized protein from Streptomyces coelicolor (strain ATCC BAA-471 / A3(2) / M145).